Reading from the N-terminus, the 242-residue chain is Probable 2-phosphosulfolactate phosphatase (242 aa).

Belongs to the ComB family. The cofactor is Mg(2+).

The catalysed reaction is (2R)-O-phospho-3-sulfolactate + H2O = (2R)-3-sulfolactate + phosphate. The protein is Probable 2-phosphosulfolactate phosphatase of Synechococcus sp. (strain JA-3-3Ab) (Cyanobacteria bacterium Yellowstone A-Prime).